Reading from the N-terminus, the 296-residue chain is Acetyl-coenzyme A carboxylase carboxyl transferase subunit beta (296 aa).

In terms of domain architecture, CoA carboxyltransferase N-terminal spans 25–294 (LWIKDPSTGE…NSDAPAPPEA (270 aa)).

Belongs to the AccD/PCCB family. Acetyl-CoA carboxylase is a heterohexamer composed of biotin carboxyl carrier protein (AccB), biotin carboxylase (AccC) and two subunits each of ACCase subunit alpha (AccA) and ACCase subunit beta (AccD).

It localises to the cytoplasm. The catalysed reaction is N(6)-carboxybiotinyl-L-lysyl-[protein] + acetyl-CoA = N(6)-biotinyl-L-lysyl-[protein] + malonyl-CoA. Its pathway is lipid metabolism; malonyl-CoA biosynthesis; malonyl-CoA from acetyl-CoA: step 1/1. In terms of biological role, component of the acetyl coenzyme A carboxylase (ACC) complex. Biotin carboxylase (BC) catalyzes the carboxylation of biotin on its carrier protein (BCCP) and then the CO(2) group is transferred by the transcarboxylase to acetyl-CoA to form malonyl-CoA. This is Acetyl-coenzyme A carboxylase carboxyl transferase subunit beta from Brucella ovis (strain ATCC 25840 / 63/290 / NCTC 10512).